The following is a 939-amino-acid chain: Zinc finger RNA-binding protein 2 (939 aa).

Disordered stretches follow at residues 1–72 (MATS…AYGS), 116–185 (GRMT…IVTS), 217–264 (FYPP…PKAG), 289–314 (HLGG…SPRG), 360–389 (LEPA…ASSR), 401–449 (ALCE…DAQP), 545–590 (RLEE…SSDD), and 906–939 (RLGA…EGLV). Composition is skewed to polar residues over residues 137 to 147 (PHGSHSHAQPP) and 157 to 184 (QPAS…SIVT). Residues 217–239 (FYPPAQPPPPPGPPQQLPPPPAP) show a composition bias toward pro residues. The stretch at 516 to 549 (KVLEERMRKQRHLAEERLEQLRRWHAERRRLEEE) forms a coiled coil. A DZF domain is found at 570-935 (RPESPASAPL…GEKKRGRRGG (366 aa)). Residues 906-916 (RLGARFRKRQR) are compositionally biased toward basic residues.

The polypeptide is Zinc finger RNA-binding protein 2 (ZFR2) (Homo sapiens (Human)).